The chain runs to 336 residues: Spore photoproduct lyase (336 aa).

Residues 74–305 (CKPSANYQLP…KFGQFGYGKY (232 aa)) form the Radical SAM core domain. [4Fe-4S] cluster contacts are provided by Cys-88, Cys-92, and Cys-95. Residues 215 to 232 (ESAYNILNSGYKTGFIVG) constitute a DNA-binding region (H-T-H motif).

Belongs to the radical SAM superfamily. SPL family. In terms of assembly, monomer or homodimer. [4Fe-4S] cluster is required as a cofactor. S-adenosyl-L-methionine serves as cofactor.

The enzyme catalyses (5R)-5,6-dihydro-5-(thymidin-7-yl)thymidine in DNA = a thymidine dimer in DNA. In terms of biological role, involved in repair of UV radiation-induced DNA damage during spore germination. Can repair thymine dimer 5-thyminyl-5,6-dihydrothymine (known as spore photoproduct (SP)) by in situ monomerization of SP to two thymines. The sequence is that of Spore photoproduct lyase (splB) from Clostridium acetobutylicum (strain ATCC 824 / DSM 792 / JCM 1419 / IAM 19013 / LMG 5710 / NBRC 13948 / NRRL B-527 / VKM B-1787 / 2291 / W).